The chain runs to 64 residues: Large ribosomal subunit protein bL33 (64 aa).

This sequence belongs to the bacterial ribosomal protein bL33 family.

The protein is Large ribosomal subunit protein bL33 of Thermosynechococcus vestitus (strain NIES-2133 / IAM M-273 / BP-1).